Here is a 506-residue protein sequence, read N- to C-terminus: GPI mannosyltransferase 3 (506 aa).

N-linked (GlcNAc...) asparagine glycosylation occurs at asparagine 115. 6 consecutive transmembrane segments (helical) span residues 180-200 (AFAC…LLFW), 229-249 (YGRL…NIIA), 257-277 (FVFP…SSLY), 285-305 (YLSQ…LLTM), 330-350 (FVYP…SSFS), and 358-378 (FFFL…RFHQ). A glycan (N-linked (GlcNAc...) asparagine) is linked at asparagine 395.

Belongs to the glycosyltransferase 22 family. PIGB subfamily.

The protein localises to the endoplasmic reticulum membrane. It participates in glycolipid biosynthesis; glycosylphosphatidylinositol-anchor biosynthesis. Its function is as follows. Mannosyltransferase involved in glycosylphosphatidylinositol-anchor biosynthesis. Transfers the third mannose to Man2-GlcN-acyl-PI during GPI precursor assembly. This chain is GPI mannosyltransferase 3 (gpi10), found in Schizosaccharomyces pombe (strain 972 / ATCC 24843) (Fission yeast).